The chain runs to 596 residues: MSTSPAARPTSNAHLLGWVDEMAKLCKPDRVYWCDGSEAEKKRLTDDAVAAKVLIPLDQQKWPGCHYHHSNSSDVARVEHLTFICTPTKEQAGPTNNWMEPKEAYRKLGAIFDGSMKGRTMYVVPYVMGPSTSPFAKVGIEITDSVYVALNMGIMARMGKVALDRLGDSDEFNRGLHSVADCNPERRFICHFPQDNTIWSVGSGYGGNALLGKKCLALRIASYLAKNEGWLAEHMLILEAESPTGEKQYVAAAFPSACGKTNFAMMIPPAAFPGWKIRTVGDDISWMRVGEDGRLWAVNPENGYFGVAPGTNRKTNPNAMDSVRKDTIFTNVARTPDGDIWWEGMDHEAPAELIDWKGQPWKKGSTEKAAHPNSRFTAPAKNNPAISPLVDDPKGVPISAIIFGGRRSTTVPLVLEAFNWTHGVYLGSTMGSETTAAATGQVGVVRRDPMAMLPFIGYDCGSYLQHWLDMQSRIPNPPKIFLVNWFRKSAEGKFLWPGYGDNMRVLKWMLDRAAGRAPAQETLLGYTPGDAGLDLHGLDVSKDAIAAATRIDLGEWEQELESQSEWFEKLGKTLPRPLALQRELLLERVRAARKVK.

Substrate is bound by residues R77 and 205–207 (YGG). Positions 214 and 234 each coordinate Mn(2+). S256 serves as a coordination point for substrate. Position 257–262 (257–262 (ACGKTN)) interacts with GTP. C258 is a catalytic residue. Mn(2+) is bound at residue D283. The segment at 362-388 (KKGSTEKAAHPNSRFTAPAKNNPAISP) is disordered. 373 to 375 (NSR) contacts substrate. Residues R375, R406, and 499-502 (YGDN) each bind GTP.

It belongs to the phosphoenolpyruvate carboxykinase [GTP] family. In terms of assembly, monomer. Mn(2+) serves as cofactor.

It is found in the cytoplasm. The catalysed reaction is oxaloacetate + GTP = phosphoenolpyruvate + GDP + CO2. It functions in the pathway carbohydrate biosynthesis; gluconeogenesis. Functionally, catalyzes the conversion of oxaloacetate (OAA) to phosphoenolpyruvate (PEP), the rate-limiting step in the metabolic pathway that produces glucose from lactate and other precursors derived from the citric acid cycle. This is Phosphoenolpyruvate carboxykinase [GTP] from Anaeromyxobacter sp. (strain K).